We begin with the raw amino-acid sequence, 478 residues long: MSFQCVKKYEDSYDKYVLAATSEKVVLPDYLDKESKKIAETIIKKNKFTAKASEKISMTLVNKKKVIEFIIIGLGEKKKLDAKNTRQYLFDGLKNIIGKVLFSFDNKDLDNIDILAEVVEHINYKFDKYFSKKKEEFLEVSYLTDKKVPKLIEGYELAKISNIVKDLVNEQAEVLNPKELADRATKLGKKFGFDVEILDEKKAQKLGMNAYLSVARAAHHRPYVIVMRYKGNAKSKYTFGLVGKGLTYDTGGLSLKPTDSMLTMRCDMGGAATMIGAMCSVAKMKLKKNVTCVVAACENSIGPNAYRPGDILTAMNGKTIEVTNTDAEGRLTLADALTYIVRKEKVNEVIDAATLTGAIMVALGEDVTGVFTNDEKMARKVIDASENWNEYFWQMPMFDLYKKNLKSSYADMQNTGVRWGGSTNAAKFLEEFIDDTKWVHLDIAGTAWASGANPYYSQKGATGQVFRTVYSYIKDNKN.

2 residues coordinate Mn(2+): Lys244 and Asp249. Lys256 is an active-site residue. Mn(2+) is bound by residues Asp267, Asp326, and Glu328. The active site involves Arg330.

The protein belongs to the peptidase M17 family. It depends on Mn(2+) as a cofactor.

The protein resides in the cytoplasm. It catalyses the reaction Release of an N-terminal amino acid, Xaa-|-Yaa-, in which Xaa is preferably Leu, but may be other amino acids including Pro although not Arg or Lys, and Yaa may be Pro. Amino acid amides and methyl esters are also readily hydrolyzed, but rates on arylamides are exceedingly low.. The enzyme catalyses Release of an N-terminal amino acid, preferentially leucine, but not glutamic or aspartic acids.. Its function is as follows. Presumably involved in the processing and regular turnover of intracellular proteins. Catalyzes the removal of unsubstituted N-terminal amino acids from various peptides. This is Probable cytosol aminopeptidase from Fusobacterium nucleatum subsp. nucleatum (strain ATCC 25586 / DSM 15643 / BCRC 10681 / CIP 101130 / JCM 8532 / KCTC 2640 / LMG 13131 / VPI 4355).